The following is a 315-amino-acid chain: Ribosomal RNA small subunit methyltransferase H (315 aa).

Residues 36–38 (GGH), aspartate 56, phenylalanine 80, aspartate 102, and glutamine 109 contribute to the S-adenosyl-L-methionine site.

It belongs to the methyltransferase superfamily. RsmH family.

It is found in the cytoplasm. It carries out the reaction cytidine(1402) in 16S rRNA + S-adenosyl-L-methionine = N(4)-methylcytidine(1402) in 16S rRNA + S-adenosyl-L-homocysteine + H(+). In terms of biological role, specifically methylates the N4 position of cytidine in position 1402 (C1402) of 16S rRNA. The sequence is that of Ribosomal RNA small subunit methyltransferase H from Proteus mirabilis (strain HI4320).